The primary structure comprises 296 residues: Protoheme IX farnesyltransferase (296 aa).

Residues 1 to 9 lie on the Cytoplasmic side of the membrane; that stretch reads MIFKQYLQV. A helical transmembrane segment spans residues 10-28; it reads TKPGIIFGNLISVIGGFLL. Residues 29 to 37 lie on the Periplasmic side of the membrane; sequence ASKGSIDYP. A helical membrane pass occupies residues 38–56; sequence LFIYTLVGVSLVVASGCVF. Over 57 to 78 the chain is Cytoplasmic; it reads NNYIDRDIDRKMERTKNRVLVK. The helical transmembrane segment at 79–97 threads the bilayer; it reads GLISPAVSLVYATLLGIAG. Residues 98-107 lie on the Periplasmic side of the membrane; it reads FMLLWFGANP. The helical transmembrane segment at 108–126 threads the bilayer; sequence LACWLGVMGFVVYVGVYSL. At 127-197 the chain is on the cytoplasmic side; that stretch reads YMKRHSVYGT…YQAANIPVLP (71 aa). The helical transmembrane segment at 198–216 threads the bilayer; that stretch reads VVKGISVAKNHITLYIIAF. Residues 217 to 228 lie on the Periplasmic side of the membrane; it reads AVATLMLSLGGY. Residues 229-247 form a helical membrane-spanning segment; that stretch reads AGYKYLVVAAAVSVWWLGM. Over 248 to 268 the chain is Cytoplasmic; the sequence is ALRGYKVADDRIWARKLFGFS. A helical transmembrane segment spans residues 269 to 287; that stretch reads IIAITALSVMMSVDFMVPD. Topologically, residues 288-296 are periplasmic; the sequence is SHTLLAAVW.

It belongs to the UbiA prenyltransferase family. Protoheme IX farnesyltransferase subfamily.

Its subcellular location is the cell inner membrane. It carries out the reaction heme b + (2E,6E)-farnesyl diphosphate + H2O = Fe(II)-heme o + diphosphate. The protein operates within porphyrin-containing compound metabolism; heme O biosynthesis; heme O from protoheme: step 1/1. In terms of biological role, converts heme B (protoheme IX) to heme O by substitution of the vinyl group on carbon 2 of heme B porphyrin ring with a hydroxyethyl farnesyl side group. This is Protoheme IX farnesyltransferase from Escherichia coli O1:K1 / APEC.